A 125-amino-acid chain; its full sequence is Cu-Zn superoxide dismutase-like protein (125 aa).

Cys52 and Cys102 are oxidised to a cystine.

The protein belongs to the Cu-Zn superoxide dismutase family.

It is found in the host cytoplasm. Functionally, virion protein with no enzymatic activity. This is Cu-Zn superoxide dismutase-like protein from Mus musculus (Mouse).